The sequence spans 385 residues: Effector protein hopAB3 (385 aa).

Disordered stretches follow at residues 1 to 61 (MVGI…AGRP), 73 to 139 (TREW…SPLY), and 215 to 293 (ADSQ…PRIN). A host recognition region spans residues 1–333 (MVGISGRAGP…INMEDLRAAL (333 aa)). The segment covering 217 to 234 (SQQAARAPARTPPRSSVR) has biased composition (low complexity). 2 stretches are compositionally biased toward polar residues: residues 245 to 256 (ATESSSGSNQRS) and 265 to 283 (MTSNQRRPSSASNASTSQR).

The protein belongs to the HopAB family. As to quaternary structure, interacts physically with plant cell Pto.

Its subcellular location is the secreted. Functionally, effector protein involved in gene-for-gene resistance in tomato plants. It is recognized by the host Pto resistance protein and elicits Pto and Prf-dependent hypersensitive response (HR) and programmed cell death (PCD), resulting in host immunity. In susceptible plants, promotes virulence, in part, by enhancing the development of disease symptoms and bacterial growth. This chain is Effector protein hopAB3 (hopAB3), found in Pseudomonas syringae pv. maculicola.